A 796-amino-acid polypeptide reads, in one-letter code: Potassium transporter 10 (796 aa).

The interval 1-30 is disordered; it reads MAGRVESSIGGGEIDEEGDERGSMWDLDQS. The Cytoplasmic portion of the chain corresponds to 1–58; the sequence is MAGRVESSIGGGEIDEEGDERGSMWDLDQSLDQPMDEEAGRLRNMYREKKFSAFLLLQ. The helical transmembrane segment at 59-79 threads the bilayer; the sequence is LSFQSLGVVYGDLGTSPLYVF. The Extracellular segment spans residues 80-95; that stretch reads YNTFPRGIKDPEDIIG. The chain crosses the membrane as a helical span at residues 96–116; that stretch reads ALSLIIYSLTLIPLLKYVFVV. The Cytoplasmic portion of the chain corresponds to 117-184; the sequence is CKANDNGQGG…ENGTSRKNAL (68 aa). A helical membrane pass occupies residues 185–205; sequence LILVLVGTCMVIGDGILTPAI. The Extracellular segment spans residues 206-217; it reads SVLSAAGGLRVN. The chain crosses the membrane as a helical span at residues 218–238; the sequence is LPHINNGIVVVVAVVILVSLF. The Cytoplasmic segment spans residues 239–248; that stretch reads SVQHYGTDRV. Residues 249-269 form a helical membrane-spanning segment; it reads GWLFAPIVFLWFLFIASIGMF. Topologically, residues 270-298 are extracellular; it reads NIWKHDPSVLKAFSPVYIFRYFKRGGQDR. Residues 299 to 319 form a helical membrane-spanning segment; that stretch reads WTSLGGIMLSITGIEALFADL. Residues 320-321 are Cytoplasmic-facing; it reads SH. A helical membrane pass occupies residues 322 to 342; the sequence is FPVSAVQFAFTVIVFPCLLLA. The Extracellular segment spans residues 343–368; the sequence is YSGQAAYLRKYPHHVEDAFYQSIPKR. A helical membrane pass occupies residues 369 to 389; the sequence is VYWPMFIIATAAAIVASQATI. Residues 390 to 420 lie on the Cytoplasmic side of the membrane; sequence SATFSLIKQALAHGCFPRVKVVHTSRKFLGQ. The chain crosses the membrane as a helical span at residues 421–441; that stretch reads IYVPDINWILMILCIAVTAGF. The Extracellular portion of the chain corresponds to 442–453; the sequence is KNQNQIGNAYGT. The helical transmembrane segment at 454–474 threads the bilayer; the sequence is AVVIVMLVTTLLMMLIMILVW. The Cytoplasmic segment spans residues 475 to 480; it reads RCHWVL. A helical membrane pass occupies residues 481-501; the sequence is VLLFTLLSLVVECTYFSAVLF. At 502-505 the chain is on the extracellular side; it reads KVNQ. A helical transmembrane segment spans residues 506–526; sequence GGWVPLVIAAAFLVIMYVWHY. Topologically, residues 527–796 are cytoplasmic; sequence GTLKRYEFEM…LLNVGQIFYV (270 aa).

The protein belongs to the HAK/KUP transporter (TC 2.A.72.3) family.

The protein resides in the cell membrane. Putative potassium transporter. This is Potassium transporter 10 (POT10) from Arabidopsis thaliana (Mouse-ear cress).